Consider the following 469-residue polypeptide: Aspartyl/glutamyl-tRNA(Asn/Gln) amidotransferase subunit B (469 aa).

Belongs to the GatB/GatE family. GatB subfamily. In terms of assembly, heterotrimer of A, B and C subunits.

It carries out the reaction L-glutamyl-tRNA(Gln) + L-glutamine + ATP + H2O = L-glutaminyl-tRNA(Gln) + L-glutamate + ADP + phosphate + H(+). The catalysed reaction is L-aspartyl-tRNA(Asn) + L-glutamine + ATP + H2O = L-asparaginyl-tRNA(Asn) + L-glutamate + ADP + phosphate + 2 H(+). Functionally, allows the formation of correctly charged Asn-tRNA(Asn) or Gln-tRNA(Gln) through the transamidation of misacylated Asp-tRNA(Asn) or Glu-tRNA(Gln) in organisms which lack either or both of asparaginyl-tRNA or glutaminyl-tRNA synthetases. The reaction takes place in the presence of glutamine and ATP through an activated phospho-Asp-tRNA(Asn) or phospho-Glu-tRNA(Gln). In Thermus thermophilus (strain ATCC BAA-163 / DSM 7039 / HB27), this protein is Aspartyl/glutamyl-tRNA(Asn/Gln) amidotransferase subunit B.